The sequence spans 325 residues: Bifunctional nuclease 2 (325 aa).

The BFN domain maps to 119–254 (CVHNNSQGRN…SLAYSDGIRS (136 aa)). One can recognise a UVR domain in the interval 285-320 (EAQEFGLIRNMLIAAVEERYKDAATWRDKLMLLRSK).

This sequence belongs to the bifunctional nuclease family.

The protein resides in the nucleus. Its function is as follows. Bifunctional nuclease with both RNase and DNase activities. Involved in basal defense response. Participates in abscisic acid-derived callose deposition following infection by a necrotrophic pathogen. This is Bifunctional nuclease 2 (BBD2) from Oryza sativa subsp. japonica (Rice).